A 131-amino-acid chain; its full sequence is Conotoxin Cal8.2 (131 aa).

Positions 1–19 (MKLLLTLLLGSALMCITLA) are cleaved as a signal peptide. Residues 20–38 (DECGLGTHRPVKEVIDNVR) constitute a propeptide that is removed on maturation.

Post-translationally, contains 4 disulfide bonds. In terms of tissue distribution, expressed by the venom duct.

Its subcellular location is the secreted. Probable neurotoxin with unknown target. Possibly targets ion channels. The chain is Conotoxin Cal8.2 from Californiconus californicus (California cone).